A 350-amino-acid chain; its full sequence is Quinone oxidoreductase-like protein 2 (350 aa).

An N6-acetyllysine modification is found at Lys36. Residue Lys201 is modified to N6-succinyllysine. N6-acetyllysine is present on residues Lys302 and Lys328.

It belongs to the zinc-containing alcohol dehydrogenase family. Quinone oxidoreductase subfamily.

The polypeptide is Quinone oxidoreductase-like protein 2 (Mus musculus (Mouse)).